We begin with the raw amino-acid sequence, 38 residues long: Bacteriocin curvaticin FS47 (38 aa).

The protein resides in the secreted. In terms of biological role, bacteriocin active against Listeria monocytogenes, Pediococcus, Enterococcus, Lactobacilli and Bacilli. The chain is Bacteriocin curvaticin FS47 from Latilactobacillus curvatus (Lactobacillus curvatus).